Reading from the N-terminus, the 204-residue chain is Putative 3-methyladenine DNA glycosylase (204 aa).

This sequence belongs to the DNA glycosylase MPG family.

The protein is Putative 3-methyladenine DNA glycosylase of Mycobacterium sp. (strain KMS).